The following is a 298-amino-acid chain: Protoheme IX farnesyltransferase (298 aa).

The next 8 membrane-spanning stretches (helical) occupy residues 26-46, 48-68, 110-130, 147-167, 174-194, 220-240, 243-263, and 276-296; these read IVIL…GGPP, LGLT…ANAI, FLVL…GLLF, IVIG…AVTG, VIMF…LALF, ILLY…TGTV, LYLW…VGLL, and TYGW…LDVT.

It belongs to the UbiA prenyltransferase family. Protoheme IX farnesyltransferase subfamily. As to quaternary structure, interacts with CtaA.

It localises to the cell membrane. It carries out the reaction heme b + (2E,6E)-farnesyl diphosphate + H2O = Fe(II)-heme o + diphosphate. It participates in porphyrin-containing compound metabolism; heme O biosynthesis; heme O from protoheme: step 1/1. Functionally, converts heme B (protoheme IX) to heme O by substitution of the vinyl group on carbon 2 of heme B porphyrin ring with a hydroxyethyl farnesyl side group. The sequence is that of Protoheme IX farnesyltransferase from Symbiobacterium thermophilum (strain DSM 24528 / JCM 14929 / IAM 14863 / T).